Here is a 244-residue protein sequence, read N- to C-terminus: Membrane-spanning 4-domains subfamily A member 6B (244 aa).

Residues methionine 1–lysine 46 lie on the Cytoplasmic side of the membrane. A helical membrane pass occupies residues valine 47 to alanine 67. Topologically, residues serine 68–lysine 84 are extracellular. Residues serine 85 to threonine 105 traverse the membrane as a helical segment. Topologically, residues glutamate 106–asparagine 121 are cytoplasmic. The helical transmembrane segment at isoleucine 122 to leucine 142 threads the bilayer. Topologically, residues histidine 143–serine 176 are extracellular. The helical transmembrane segment at valine 177–valine 197 threads the bilayer. Over leucine 198 to cysteine 244 the chain is Cytoplasmic.

The protein belongs to the MS4A family. Expressed at high levels in thymus, spleen, and peripheral lymph nodes, with less abundant levels in non-lymphoid tissues.

It localises to the membrane. Its function is as follows. May be involved in signal transduction as a component of a multimeric receptor complex. In Mus musculus (Mouse), this protein is Membrane-spanning 4-domains subfamily A member 6B (Ms4a6b).